The following is a 509-amino-acid chain: Tyrosine-protein kinase STK (509 aa).

Residues 1 to 16 show a composition bias toward polar residues; sequence MGPCCSKQTKALNNQP. The disordered stretch occupies residues 1–23; the sequence is MGPCCSKQTKALNNQPDKSKSKD. G2 carries the N-myristoyl glycine lipid modification. Residues 59–120 form the SH3 domain; it reads PGVTIFVALY…PSTYVAPEKS (62 aa). Residues 126–218 enclose the SH2 domain; that stretch reads WYFGDVKRAE…GLVCALTLPC (93 aa). The region spanning 240-495 is the Protein kinase domain; that stretch reads LRLNRKLGAG…LQGVLEDYFV (256 aa). ATP-binding positions include 246 to 254 and K268; that span reads LGAGQFGEV. The Proton acceptor role is filled by D360. Y390 bears the Phosphotyrosine; by autocatalysis mark.

It belongs to the protein kinase superfamily. Tyr protein kinase family. SRC subfamily.

It carries out the reaction L-tyrosyl-[protein] + ATP = O-phospho-L-tyrosyl-[protein] + ADP + H(+). The polypeptide is Tyrosine-protein kinase STK (STK) (Hydra vulgaris (Hydra)).